A 292-amino-acid chain; its full sequence is Elongation factor Ts (292 aa).

The tract at residues 82–85 (TDFV) is involved in Mg(2+) ion dislocation from EF-Tu.

The protein belongs to the EF-Ts family.

The protein localises to the cytoplasm. In terms of biological role, associates with the EF-Tu.GDP complex and induces the exchange of GDP to GTP. It remains bound to the aminoacyl-tRNA.EF-Tu.GTP complex up to the GTP hydrolysis stage on the ribosome. The chain is Elongation factor Ts from Legionella pneumophila (strain Lens).